The chain runs to 374 residues: Peptide chain release factor 2 (374 aa).

At Q250 the chain carries N5-methylglutamine.

This sequence belongs to the prokaryotic/mitochondrial release factor family. Post-translationally, methylated by PrmC. Methylation increases the termination efficiency of RF2.

The protein localises to the cytoplasm. Its function is as follows. Peptide chain release factor 2 directs the termination of translation in response to the peptide chain termination codons UGA and UAA. This chain is Peptide chain release factor 2, found in Beutenbergia cavernae (strain ATCC BAA-8 / DSM 12333 / CCUG 43141 / JCM 11478 / NBRC 16432 / NCIMB 13614 / HKI 0122).